The sequence spans 1059 residues: Isoleucine--tRNA ligase (1059 aa).

Residues 59–69 (PFANGLPHYGH) carry the 'HIGH' region motif. Positions 637 to 641 (KMSKS) match the 'KMSKS' region motif. Lys-640 provides a ligand contact to ATP.

This sequence belongs to the class-I aminoacyl-tRNA synthetase family. IleS type 2 subfamily. In terms of assembly, monomer. The cofactor is Zn(2+).

It localises to the cytoplasm. The catalysed reaction is tRNA(Ile) + L-isoleucine + ATP = L-isoleucyl-tRNA(Ile) + AMP + diphosphate. Functionally, catalyzes the attachment of isoleucine to tRNA(Ile). As IleRS can inadvertently accommodate and process structurally similar amino acids such as valine, to avoid such errors it has two additional distinct tRNA(Ile)-dependent editing activities. One activity is designated as 'pretransfer' editing and involves the hydrolysis of activated Val-AMP. The other activity is designated 'posttransfer' editing and involves deacylation of mischarged Val-tRNA(Ile). The protein is Isoleucine--tRNA ligase of Mycobacterium leprae (strain TN).